The following is a 367-amino-acid chain: Heme A synthase (367 aa).

A run of 5 helical transmembrane segments spans residues 26-46, 111-131, 139-159, 174-194, and 212-232; these read IRGW…VGGA, LLAR…WVTG, LPLL…WWMV, LATH…IYRG, and AGAI…VAGL. His274 serves as a coordination point for heme. 3 consecutive transmembrane segments (helical) span residues 276–296, 305–325, and 327–347; these read LGAY…LRAA, SVLL…TLLL, and VPIG…GFAI. Residue His335 coordinates heme.

Belongs to the COX15/CtaA family. Type 2 subfamily. As to quaternary structure, interacts with CtaB. Requires heme b as cofactor.

The protein localises to the cell membrane. It carries out the reaction Fe(II)-heme o + 2 A + H2O = Fe(II)-heme a + 2 AH2. It functions in the pathway porphyrin-containing compound metabolism; heme A biosynthesis; heme A from heme O: step 1/1. In terms of biological role, catalyzes the conversion of heme O to heme A by two successive hydroxylations of the methyl group at C8. The first hydroxylation forms heme I, the second hydroxylation results in an unstable dihydroxymethyl group, which spontaneously dehydrates, resulting in the formyl group of heme A. This Rhizobium meliloti (strain 1021) (Ensifer meliloti) protein is Heme A synthase.